We begin with the raw amino-acid sequence, 367 residues long: 2'-5'-oligoadenylate synthase 1A (367 aa).

Positions 14–61 (DKFIEDYLLPDTTFGADVKSAVNVVCDFLKERCFQGAAHPVRVSKVVK) are interaction with dsRNA. Ser-64 serves as a coordination point for ATP. 3 residues coordinate Mg(2+): Asp-76, Asp-78, and Asp-149. Residues 201–211 (QRPTKLKSLIR) form an interaction with dsRNA region. The ATP site is built by Arg-211, Lys-214, and Gln-231. Cys-364 carries S-geranylgeranyl cysteine lipidation.

This sequence belongs to the 2-5A synthase family. As to quaternary structure, monomer. Homotetramer. Interacts with OAS1D; the interaction inhibits OAS1A catalytic activity. Mg(2+) serves as cofactor. C-terminal prenylated. Expressed in oocytes and granulosa cells of ovary, in intestine, stomach, spleen and uterus (at protein level). Expressed at high levels in the digestive tract and lymphoid organs. Expressed in ovary and spleen.

Its subcellular location is the cytoplasm. The protein localises to the mitochondrion. It localises to the nucleus. The protein resides in the microsome. It is found in the endoplasmic reticulum. It catalyses the reaction 3 ATP = 5'-triphosphoadenylyl-(2'-&gt;5')-adenylyl-(2'-&gt;5')-adenosine + 2 diphosphate. Produced as a latent enzyme which is activated by dsRNA generated during the course of viral infection. The dsRNA activator must be at least 15 nucleotides long, and no modification of the 2'-hydroxyl group is tolerated. ssRNA or dsDNA do not act as activators. In terms of biological role, interferon-induced, dsRNA-activated antiviral enzyme which plays a critical role in cellular innate antiviral response. In addition, it may also play a role in other cellular processes such as apoptosis, cell growth, differentiation and gene regulation. Synthesizes higher oligomers of 2'-5'-oligoadenylates (2-5A) from ATP which then bind to the inactive monomeric form of ribonuclease L (RNase L) leading to its dimerization and subsequent activation. Activation of RNase L leads to degradation of cellular as well as viral RNA, resulting in the inhibition of protein synthesis, thus terminating viral replication. Can mediate the antiviral effect via the classical RNase L-dependent pathway or an alternative antiviral pathway independent of RNase L. In Mus musculus (Mouse), this protein is 2'-5'-oligoadenylate synthase 1A (Oas1a).